We begin with the raw amino-acid sequence, 292 residues long: Mitochondrial ornithine transporter 1 (292 aa).

Solcar repeat units follow at residues 11 to 97 (EGAI…CSKF), 105 to 196 (SPLG…VKKS), and 211 to 292 (SKIW…LSAL). 6 consecutive transmembrane segments (helical) span residues 14–34 (ILDI…EFPF), 69–89 (FFQG…TLFV), 104–124 (VSPL…ASLV), 171–187 (GQSG…VAWF), 213–233 (IWEL…SIFP), and 267–287 (GLGI…YIFE).

This sequence belongs to the mitochondrial carrier (TC 2.A.29) family.

The protein resides in the mitochondrion inner membrane. In terms of biological role, required for arginine biosynthesis. Transports ornithine synthesized from glutamate in the mitochondrial matrix to the cytosol, where it is converted to arginine. This is Mitochondrial ornithine transporter 1 (ORT1) from Saccharomyces cerevisiae (strain ATCC 204508 / S288c) (Baker's yeast).